Consider the following 244-residue polypeptide: Protein crossbronx (244 aa).

Residues 20–176 form the UBC core domain; the sequence is QQEYKILAEY…VQENIKESKE (157 aa). The disordered stretch occupies residues 209-244; that stretch reads AGRSKQTEPSAQQGNGGHATGLSWVKEGEFKPLSIE.

It belongs to the ubiquitin-conjugating enzyme family. FTS subfamily.

This is Protein crossbronx (cbx) from Drosophila sechellia (Fruit fly).